Consider the following 159-residue polypeptide: tRNA-specific adenosine deaminase (159 aa).

The CMP/dCMP-type deaminase domain maps to 6 to 133 (EEQTYFMQEA…ERLNHRVQVE (128 aa)). Position 57 (histidine 57) interacts with Zn(2+). Glutamate 59 functions as the Proton donor in the catalytic mechanism. Cysteine 87 and cysteine 90 together coordinate Zn(2+).

Belongs to the cytidine and deoxycytidylate deaminase family. As to quaternary structure, homodimer. The cofactor is Zn(2+).

The enzyme catalyses adenosine(34) in tRNA + H2O + H(+) = inosine(34) in tRNA + NH4(+). Functionally, catalyzes the deamination of adenosine to inosine at the wobble position 34 of tRNA(Arg2). The sequence is that of tRNA-specific adenosine deaminase from Streptococcus pyogenes serotype M18 (strain MGAS8232).